The chain runs to 487 residues: Glutamyl-tRNA(Gln) amidotransferase subunit A (487 aa).

Residues lysine 75 and serine 150 each act as charge relay system in the active site. Residue serine 174 is the Acyl-ester intermediate of the active site.

The protein belongs to the amidase family. GatA subfamily. In terms of assembly, heterotrimer of A, B and C subunits.

It carries out the reaction L-glutamyl-tRNA(Gln) + L-glutamine + ATP + H2O = L-glutaminyl-tRNA(Gln) + L-glutamate + ADP + phosphate + H(+). Its function is as follows. Allows the formation of correctly charged Gln-tRNA(Gln) through the transamidation of misacylated Glu-tRNA(Gln) in organisms which lack glutaminyl-tRNA synthetase. The reaction takes place in the presence of glutamine and ATP through an activated gamma-phospho-Glu-tRNA(Gln). The chain is Glutamyl-tRNA(Gln) amidotransferase subunit A from Deinococcus deserti (strain DSM 17065 / CIP 109153 / LMG 22923 / VCD115).